Reading from the N-terminus, the 103-residue chain is N(4)-acetylcytidine amidohydrolase (103 aa).

The ASCH domain maps to 6 to 92; it reads TFFERFEQDI…VIQEIYPGLE (87 aa). Lys20 serves as the catalytic Proton acceptor. Residue Thr23 is the Nucleophile of the active site. Residue Glu73 is the Proton donor of the active site.

Belongs to the N(4)-acetylcytidine amidohydrolase family.

The catalysed reaction is N(4)-acetylcytidine + H2O = cytidine + acetate + H(+). It catalyses the reaction N(4)-acetyl-2'-deoxycytidine + H2O = 2'-deoxycytidine + acetate + H(+). The enzyme catalyses N(4)-acetylcytosine + H2O = cytosine + acetate + H(+). Functionally, catalyzes the hydrolysis of N(4)-acetylcytidine (ac4C). The polypeptide is N(4)-acetylcytidine amidohydrolase (Shewanella sp. (strain MR-4)).